A 572-amino-acid polypeptide reads, in one-letter code: Neuronal acetylcholine receptor subunit alpha-9-I (572 aa).

Positions 1–19 (MKTVVLLTWISCWIDVCTS) are cleaved as a signal peptide. Residues 20 to 232 (AQGRYAQKLL…YTLHLKRRSL (213 aa)) are Extracellular-facing. Asn51 carries N-linked (GlcNAc...) asparagine glycosylation. Cysteines 149 and 163 form a disulfide. N-linked (GlcNAc...) asparagine glycosylation occurs at Asn164. The cysteines at positions 213 and 214 are disulfide-linked. 3 helical membrane passes run 233–253 (FYIF…PLGF), 263–283 (VSLG…VAES), and 297–317 (YIAT…IMNI). Over 318-550 (HFCGAEAKPV…WKKVAKVMDR (233 aa)) the chain is Cytoplasmic. Residues 405-458 (GHLQNHHSTHQNHLDNCRYANGGHRDDHYSNRSNQNHHSNRSQTSKGEGGEEKR) are disordered. Low complexity predominate over residues 435 to 447 (NRSNQNHHSNRSQ). The chain crosses the membrane as a helical span at residues 551–571 (FFMWIFFIMVFLMSILIIGKA).

This sequence belongs to the ligand-gated ion channel (TC 1.A.9) family. Acetylcholine receptor (TC 1.A.9.1) subfamily. In terms of tissue distribution, expressed in the liver, olfactory mucosa, pituitary gland, hair cells of the saccule and spleen.

The protein resides in the postsynaptic cell membrane. It is found in the cell membrane. This Oncorhynchus mykiss (Rainbow trout) protein is Neuronal acetylcholine receptor subunit alpha-9-I (nachra9).